The chain runs to 626 residues: Ankyrin repeat domain-containing protein 13B (626 aa).

At methionine 1 the chain carries N-acetylmethionine. ANK repeat units follow at residues 47–76 (RGRTPLHLATTLGHLECARVLLAHGADVGR) and 80–109 (SGWTVLQEAVSTRDLELVQLVLRYRDYQRV). Residues 442 to 470 (PVPSVRGSPGSETPSPGSDSSSVSSSSST) form a disordered region. Residues 448–470 (GSPGSETPSPGSDSSSVSSSSST) are compositionally biased toward low complexity. Residues 503 to 522 (EDDDLLRFAIQQSLLEAGSE) enclose the UIM 1 domain. The disordered stretch occupies residues 534-614 (NSKPGTHPMS…RRRVRQEEEE (81 aa)). A compositionally biased stretch (pro residues) spans 554–575 (PPTPQRQPMPPAPVPSPRPSPG). 2 UIM domains span residues 585-604 (SYDEQLRLAMELSAQEQEER) and 610-626 (QEEEELERILRLSLTEQ).

In terms of assembly, interacts with EGFR (ubiquitinated); the interaction is direct and may regulate EGFR internalization.

It localises to the cell membrane. It is found in the late endosome. The protein localises to the early endosome. Functionally, ubiquitin-binding protein that specifically recognizes and binds 'Lys-63'-linked ubiquitin. Does not bind 'Lys-48'-linked ubiquitin. Positively regulates the internalization of ligand-activated EGFR by binding to the Ub moiety of ubiquitinated EGFR at the cell membrane. This is Ankyrin repeat domain-containing protein 13B (Ankrd13b) from Mus musculus (Mouse).